Here is a 273-residue protein sequence, read N- to C-terminus: Formamidopyrimidine-DNA glycosylase (273 aa).

Proline 2 serves as the catalytic Schiff-base intermediate with DNA. The Proton donor role is filled by glutamate 3. Residue lysine 58 is the Proton donor; for beta-elimination activity of the active site. Residues histidine 92, arginine 111, and arginine 153 each contribute to the DNA site. An FPG-type zinc finger spans residues 238-272 (RVYGREGQKCFNCSSTILKTKNSGRSTFYCKTCQY). Arginine 262 functions as the Proton donor; for delta-elimination activity in the catalytic mechanism.

It belongs to the FPG family. Monomer. Zn(2+) serves as cofactor.

It carries out the reaction Hydrolysis of DNA containing ring-opened 7-methylguanine residues, releasing 2,6-diamino-4-hydroxy-5-(N-methyl)formamidopyrimidine.. It catalyses the reaction 2'-deoxyribonucleotide-(2'-deoxyribose 5'-phosphate)-2'-deoxyribonucleotide-DNA = a 3'-end 2'-deoxyribonucleotide-(2,3-dehydro-2,3-deoxyribose 5'-phosphate)-DNA + a 5'-end 5'-phospho-2'-deoxyribonucleoside-DNA + H(+). Its function is as follows. Involved in base excision repair of DNA damaged by oxidation or by mutagenic agents. Acts as a DNA glycosylase that recognizes and removes damaged bases. Has a preference for oxidized purines, such as 7,8-dihydro-8-oxoguanine (8-oxoG). Has AP (apurinic/apyrimidinic) lyase activity and introduces nicks in the DNA strand. Cleaves the DNA backbone by beta-delta elimination to generate a single-strand break at the site of the removed base with both 3'- and 5'-phosphates. In Rickettsia canadensis (strain McKiel), this protein is Formamidopyrimidine-DNA glycosylase.